The primary structure comprises 427 residues: Trigger factor (427 aa).

The PPIase FKBP-type domain maps to 163 to 248 (GDTVVIDFVG…VHEVKAKEVP (86 aa)).

It belongs to the FKBP-type PPIase family. Tig subfamily.

The protein localises to the cytoplasm. It carries out the reaction [protein]-peptidylproline (omega=180) = [protein]-peptidylproline (omega=0). In terms of biological role, involved in protein export. Acts as a chaperone by maintaining the newly synthesized protein in an open conformation. Functions as a peptidyl-prolyl cis-trans isomerase. This Streptococcus equi subsp. zooepidemicus (strain H70) protein is Trigger factor.